Reading from the N-terminus, the 362-residue chain is Melatonin receptor type 1B (362 aa).

Residues 1–42 (MSENGSFANCCEAGGWAVRPGWSGAGSARPSRTPRPPWVAPA) lie on the Extracellular side of the membrane. Asn4 is a glycosylation site (N-linked (GlcNAc...) asparagine). A helical membrane pass occupies residues 43–63 (LSAVLIVTTAVDVVGNLLVIL). The Cytoplasmic portion of the chain corresponds to 64–76 (SVLRNRKLRNAGN). Residues 77–97 (LFLVSLALADLVVAFYPYPLI) form a helical membrane-spanning segment. The Extracellular segment spans residues 98 to 115 (LVAIFYDGWALGEEHCKA). Cys113 and Cys190 are oxidised to a cystine. Residues 116–136 (SAFVMGLSVIGSVFNITAIAI) form a helical membrane-spanning segment. Over 137–155 (NRYCYICHSMAYHRIYRRW) the chain is Cytoplasmic. Residues 156-176 (HTPLHICLIWLLTVVALLPNF) form a helical membrane-spanning segment. Residues Asn175 and Gln194 each contribute to the melatonin site. Residues 177–200 (FVGSLEYDPRIYSCTFIQTASTQY) lie on the Extracellular side of the membrane. The helical transmembrane segment at 201–221 (TAAVVVIHFLLPIAVVSFCYL) threads the bilayer. Topologically, residues 222–253 (RIWVLVLQARRKAKPESRLCLKPSDLRSFLTM) are cytoplasmic. A helical transmembrane segment spans residues 254–274 (FVVFVIFAICWAPLNCIGLAV). The Extracellular segment spans residues 275–287 (AINPQEMAPQIPE). A helical transmembrane segment spans residues 288–308 (GLFVTSYLLAYFNSCLNAIVY). Residues 309–362 (GLLNQNFRREYKRILLALWNPRHCIQDASKGSHAEGLQSPAPPIIGVQHQADAL) are Cytoplasmic-facing.

The protein belongs to the G-protein coupled receptor 1 family. As to quaternary structure, interacts with GPR61, GPR62 and GPR135. Expressed in retina and less in brain and hippocampus.

It is found in the cell membrane. High affinity receptor for melatonin. Likely to mediate the reproductive and circadian actions of melatonin. The activity of this receptor is mediated by pertussis toxin sensitive G proteins that inhibit adenylate cyclase activity. In Homo sapiens (Human), this protein is Melatonin receptor type 1B (MTNR1B).